Here is an 87-residue protein sequence, read N- to C-terminus: Mitochondrial import inner membrane translocase subunit TIM8 (87 aa).

Positions cysteine 44–cysteine 68 match the Twin CX3C motif motif. 2 disulfide bridges follow: cysteine 44-cysteine 68 and cysteine 48-cysteine 64.

This sequence belongs to the small Tim family. As to quaternary structure, heterohexamer; composed of 3 copies of TIM8 and 3 copies of TIM13, named soluble 70 kDa complex. Associates with the TIM22 complex, whose core is composed of TIM18, TIM22 and TIM54. Interacts with the transmembrane regions of multi-pass transmembrane proteins in transit.

It is found in the mitochondrion inner membrane. It localises to the mitochondrion intermembrane space. Its function is as follows. Mitochondrial intermembrane chaperone that participates in the import and insertion of some multi-pass transmembrane proteins into the mitochondrial inner membrane. Also required for the transfer of beta-barrel precursors from the TOM complex to the sorting and assembly machinery (SAM complex) of the outer membrane. Acts as a chaperone-like protein that protects the hydrophobic precursors from aggregation and guide them through the mitochondrial intermembrane space. The TIM8-TIM13 complex is non essential and only mediates the import of few proteins under precise conditions, while the predominant TIM9-TIM10 70 kDa complex is crucial and mediates the import of much more proteins. Strictly required for import of TIM23 in some conditions, when a low membrane potential exists in the mitochondria. The chain is Mitochondrial import inner membrane translocase subunit TIM8 (TIM8) from Saccharomyces cerevisiae (strain ATCC 204508 / S288c) (Baker's yeast).